The sequence spans 360 residues: uncharacterized protein (360 aa).

The PNPLA domain occupies 19-179 (LALGSGGARG…LDPLPMAPIA (161 aa)). The short motif at 50 to 54 (GSSMG) is the GXSXG element. The Nucleophile role is filled by Ser-52. Residue Asp-166 is the Proton acceptor of the active site. A DGA/G motif is present at residues 166 to 168 (DGG). Residues 251–282 (DSWSQAPEIEQRPAGPPADREEAADTPGLPKM) form a disordered region.

It belongs to the NTE family.

This is an uncharacterized protein from Mycobacterium bovis (strain ATCC BAA-935 / AF2122/97).